We begin with the raw amino-acid sequence, 596 residues long: Protein NRT1/ PTR FAMILY 3.1 (596 aa).

A compositionally biased stretch (basic and acidic residues) spans methionine 1–leucine 16. A disordered region spans residues methionine 1–proline 23. The next 12 membrane-spanning stretches (helical) occupy residues leucine 27–phenylalanine 47, phenylalanine 73–glycine 93, isoleucine 98–isoleucine 118, threonine 137–isoleucine 157, asparagine 185–isoleucine 205, leucine 213–phenylalanine 233, methionine 334–phenylalanine 354, isoleucine 372–tyrosine 392, methionine 416–lysine 436, isoleucine 453–alanine 473, alanine 497–valine 517, and tyrosine 542–alanine 562.

Belongs to the major facilitator superfamily. Proton-dependent oligopeptide transporter (POT/PTR) (TC 2.A.17) family. In terms of tissue distribution, expressed in shoots, stems, leaves, flowers and siliques.

Its subcellular location is the membrane. Functionally, may act as an efflux-type nitrite transporter. Not regulated by the PII protein involved in the regulation of nitrite uptake into higher plant chloroplasts. The chain is Protein NRT1/ PTR FAMILY 3.1 (NPF3.1) from Arabidopsis thaliana (Mouse-ear cress).